A 105-amino-acid chain; its full sequence is Large ribosomal subunit protein eL36 (105 aa).

Position 62 is an N6-acetyllysine (Lys-62).

It belongs to the eukaryotic ribosomal protein eL36 family. In terms of assembly, component of the large ribosomal subunit.

It is found in the cytoplasm. The protein resides in the cytosol. Component of the large ribosomal subunit. The ribosome is a large ribonucleoprotein complex responsible for the synthesis of proteins in the cell. The sequence is that of Large ribosomal subunit protein eL36 (RPL36) from Homo sapiens (Human).